The chain runs to 58 residues: UPF0339 protein TDE_0826 (58 aa).

It belongs to the UPF0339 family.

This is UPF0339 protein TDE_0826 from Treponema denticola (strain ATCC 35405 / DSM 14222 / CIP 103919 / JCM 8153 / KCTC 15104).